The chain runs to 2784 residues: Cilia- and flagella-associated protein 46 (2784 aa).

A TPR 1 repeat occupies 129 to 162 (GLEVAAANQPRYQFLVYNASVHHWRVVAPLHRDG). Positions 242–268 (TAAAAKLTELQKDVARLQVHLATLAAA) form a coiled coil. One copy of the TPR 2 repeat lies at 401 to 434 (SLAPVVVAAHVKALEQLEDVLTTFTKLADVEGIH). 2 disordered regions span residues 543–562 (SAEP…RSKE) and 581–607 (RDLP…AAAR). A compositionally biased stretch (pro residues) spans 585 to 595 (HPPPPAPTDPP). The stretch at 644-665 (AVDREMVLLQAQLAHYEAEAAI) forms a coiled coil. The disordered stretch occupies residues 670–697 (RRRADISPPTRPSPPEVDGEGVRQPPAT). One copy of the TPR 3 repeat lies at 708–743 (ASVRSMRGAMSVNEPWLTLNNAVQLYNAALPLMQQH). Disordered stretches follow at residues 799 to 837 (DAGQ…PAYK) and 929 to 954 (RVNE…KPHG). Positions 802–817 (QELEDDDDEDSLDEDG) are enriched in acidic residues. A TPR 4 repeat occupies 976–1009 (LELWAKMARAVADAGVWPAALECSAAALAALPGA). A compositionally biased stretch (acidic residues) spans 1275–1288 (TGDLDGDGTDDEDD). 2 disordered regions span residues 1275–1351 (TGDL…RVPE) and 1640–1673 (AAGG…HGQL). The segment covering 1298 to 1311 (SGGGSSSGRAGGGF) has biased composition (gly residues). Residues 1646 to 1658 (GGRESPSPHDDGI) are compositionally biased toward basic and acidic residues. TPR repeat units follow at residues 1712–1745 (HDVW…AADC) and 1854–1886 (MEML…LAAR). Residues 1961–1984 (RLAEVQLAAAEERERLAGADREKA) adopt a coiled-coil conformation. 4 disordered regions span residues 2068–2112 (RPFV…EAAA), 2278–2303 (ATAE…PAAA), 2346–2389 (AAKG…PGAA), and 2441–2465 (LPLP…AGPT). Residues 2069 to 2083 (PFVPPPKPPGAPKRP) are compositionally biased toward pro residues. Acidic residues predominate over residues 2087-2096 (AEEEEDEEGP). Low complexity predominate over residues 2097–2112 (DTAAADAAAEAAEAAA). Residues 2378–2389 (SKQGPKSGPGAA) show a composition bias toward low complexity. The span at 2450 to 2461 (DGKKEKKDKKEA) shows a compositional bias: basic and acidic residues. The TPR 7 repeat unit spans residues 2613-2646 (ATGGPCTGLLFLGVGRFAAHVPPAVLASAPLGGC).

This sequence belongs to the CFAP46 family. In terms of assembly, part of the PDCP1 complex composed of CFAP46, CFAP54, CFAP74 and CFAP221; the PDCP1 complex binds calmodulin.

The protein resides in the cytoplasm. Its subcellular location is the cytoskeleton. It is found in the cilium axoneme. In terms of biological role, as part of the central apparatus of the cilium axoneme plays a role in cilium movement and thereby cell motility. The chain is Cilia- and flagella-associated protein 46 from Chlamydomonas reinhardtii (Chlamydomonas smithii).